Here is a 580-residue protein sequence, read N- to C-terminus: Trafficking protein particle complex subunit 14 (580 aa).

2 disordered regions span residues 90–138 (GMPG…ATTL) and 480–533 (VSHP…RSGS). The segment covering 105 to 116 (PGGGDPGGGGLF) has biased composition (gly residues). The span at 124–137 (THGPGPATSGGATT) shows a compositional bias: low complexity. Ser-491 carries the phosphoserine modification. Positions 492–502 (RKSSPSSPAVR) are enriched in low complexity. A compositionally biased stretch (polar residues) spans 512 to 525 (LGRSQSFSHQQPSR). Ser-517 carries the phosphoserine modification. Phosphothreonine is present on Thr-541. Ser-546 bears the Phosphoserine mark.

As to quaternary structure, component of the multisubunit TRAPP II complex, which includes at least TRAPPC1, TRAPPC2, TRAPPC2L, TRAPPC3, TRAPPC4, TRAPPC5, TRAPPC6A/B, TRAPPC9, TRAPPC10 and TRAPPC14. TRAPPC9, TRAPPC10 and TRAPPC14 are specific subunits of the TRAPP II complex. Interacts with alpha-tubulin during mitosis. Interacts with RAB3IP (via the N-terminal region); this interaction mediates RAB3IP association with the TRAPP II complex. Interacts with TRAPPC10. Interacts with FBF1. Broadly expressed. High levels in brain, cerebellum, testis and whole blood.

Its subcellular location is the cytoplasm. It localises to the cytoskeleton. The protein localises to the spindle. The protein resides in the vesicle. It is found in the midbody. Functionally, specific subunit of the TRAPP (transport protein particle) II complex, a highly conserved vesicle tethering complex that functions in late Golgi trafficking as a membrane tether. TRAPP II complex also has GEF activity toward RAB1A. TRAPPC14 is dispensable for TRAPPII complex integrity but mediates RAB3IP preciliary vesicle trafficking to the mother centriole during ciliogenesis. Modulates YAP1 activity as transcriptional regulator. The polypeptide is Trafficking protein particle complex subunit 14 (Homo sapiens (Human)).